The chain runs to 255 residues: Syntaxin-6 (255 aa).

At S2 the chain carries N-acetylserine. S2 carries the post-translational modification Phosphoserine. The segment at 2 to 168 (SMEDPFFVVK…QAQQQLIVEQ (167 aa)) is required for interaction with VPS51. Residues 2–234 (SMEDPFFVVK…VSHMTSDRRQ (233 aa)) lie on the Cytoplasmic side of the membrane. Positions 41–74 (EEIDWTTNELRNNLRSIEWDLEDLDETISIVEAN) form a coiled coil. S129 and S152 each carry phosphoserine. Residues 163-225 (QLIVEQQDEQ…DNVMKKLAKV (63 aa)) enclose the t-SNARE coiled-coil homology domain. The chain crosses the membrane as a helical; Anchor for type IV membrane protein span at residues 235 to 255 (WCAIAILFAVLVVVLILFLVL).

Belongs to the syntaxin family. As to quaternary structure, identified in a complex containing STX6, STX12 and VAMP4. This complex also includes VTI1A. Binds EEA1. Interacts with VPS45A and GOPC. Interacts with MARCHF2; the interaction promotes MARCHF2-mediated ubiquitination and degradation of CFTR. Interacts with MARCHF3. Interacts with BLTP3B (via C-terminal coiled-coil domain). Interacts with BAIAP3; this interaction is increased in the presence of calcium. Interacts with VPS13B.

The protein resides in the golgi apparatus membrane. It localises to the golgi apparatus. It is found in the trans-Golgi network membrane. The protein localises to the recycling endosome membrane. Its function is as follows. SNARE promoting movement of transport vesicles to target membranes. Targets endosomes to the trans-Golgi network, and may therefore function in retrograde trafficking. Together with SNARE STX12, promotes movement of vesicles from endosomes to the cell membrane, and may therefore function in the endocytic recycling pathway. In Mus musculus (Mouse), this protein is Syntaxin-6 (Stx6).